Consider the following 26-residue polypeptide: Orexigenic neuropeptide 26RFa (26 aa).

Residue Phe26 is modified to Phenylalanine amide.

In terms of tissue distribution, brain.

The protein resides in the secreted. In terms of biological role, may have orexigenic activity. May promote aldosterone secretion by the adrenal gland. This Pelophylax lessonae (Pool frog) protein is Orexigenic neuropeptide 26RFa.